The chain runs to 228 residues: uncharacterized protein (228 aa).

S-adenosyl-L-methionine-binding positions include 77–79 (TTA), Gly113, Val133, and 140–142 (PSL).

This sequence belongs to the class IV-like SAM-binding methyltransferase superfamily. RNA methyltransferase TrmH family.

This is an uncharacterized protein from Escherichia coli (strain K12).